Consider the following 461-residue polypeptide: MIERCLGAYRCRRIQRALRQLKVTILCLLLTVVVLRSTIGAGKFGTPEQDLDEIRQHFHARKRGEPHRVLEEIQTGGDSSSGDGGGNSGGSNNYETFDINKIFVDEGEEEKPDPNKPYTLGPKISDWDEQRSDWLAKNPSFPNFIGPNKPRVLLVTGSAPKPCENPVGDHYLLKSIKNKIDYCRLHGIEIFYNMALLDAEMAGFWAKLPLIRKLLLSHPEIEFLWWMDSDAMFTDMAFELPWERYKDYNLVMHGWNEMVYDQKNWIGLNTGSFLLRNNQWALDLLDTWAPMGPKGKIREEAGKVLTRELKDRPVFEADDQSAMVYLLATQRDAWGNKVYLESGYYLHGYWGILVDRYEEMIENYHPGLGDHRWPLVTHFVGCKPCGKFGDYPVERCLKQMDRAFNFGDNQILQIYGFTHKSLASRKVKRVRNETSNPLEMKDELGLLHPAFKAVKVQTNQV.

Over 1–20 (MIERCLGAYRCRRIQRALRQ) the chain is Cytoplasmic. The helical; Signal-anchor for type II membrane protein transmembrane segment at 21–40 (LKVTILCLLLTVVVLRSTIG) threads the bilayer. Over 41–461 (AGKFGTPEQD…KAVKVQTNQV (421 aa)) the chain is Lumenal. The disordered stretch occupies residues 74–95 (QTGGDSSSGDGGGNSGGSNNYE). N-linked (GlcNAc...) asparagine glycosylation is present at N432.

It belongs to the glycosyltransferase 34 family. Homodimer. Interacts with XXT1 and XXT5. Interacts with FUT1 and XLT2.

Its subcellular location is the golgi apparatus membrane. It catalyses the reaction Transfers an alpha-D-xylosyl residue from UDP-D-xylose to a glucose residue in xyloglucan, forming an alpha-(1-&gt;6)-D-xylosyl-D-glucose linkage.. Functionally, xylosyltransferase specific to UDP-D-xylose that accepts both cellopentaose and cellohexaose as substrates, with a better use of cellohexaose, to produce xyloglucan. Adds preferentially the first xylosyl residue to the fourth glucosyl residue from the reducing end of both acceptors. Transfer one xylose mainly to the second glucose residue from the non-reducing end. The acceptor should have a minimum of four glucose residues. Associates with other xyloglucan-synthesizing enzymes to form multiprotein complexes for xyloglucan synthesis in the Golgi. This chain is Xyloglucan 6-xylosyltransferase 2 (XXT2), found in Arabidopsis thaliana (Mouse-ear cress).